We begin with the raw amino-acid sequence, 101 residues long: Small ribosomal subunit protein uS14 (101 aa).

It belongs to the universal ribosomal protein uS14 family. As to quaternary structure, part of the 30S ribosomal subunit. Contacts proteins S3 and S10.

In terms of biological role, binds 16S rRNA, required for the assembly of 30S particles and may also be responsible for determining the conformation of the 16S rRNA at the A site. This Paramagnetospirillum magneticum (strain ATCC 700264 / AMB-1) (Magnetospirillum magneticum) protein is Small ribosomal subunit protein uS14.